Here is a 56-residue protein sequence, read N- to C-terminus: Small ribosomal subunit protein uS14 (56 aa).

Residues cysteine 21, cysteine 24, cysteine 39, and cysteine 42 each coordinate Zn(2+).

The protein belongs to the universal ribosomal protein uS14 family. In terms of assembly, component of the 40S small ribosomal subunit. Requires Zn(2+) as cofactor.

The protein resides in the cytoplasm. It is found in the cytosol. It localises to the rough endoplasmic reticulum. This is Small ribosomal subunit protein uS14 (RpS29) from Bombyx mori (Silk moth).